Here is a 396-residue protein sequence, read N- to C-terminus: Squamosa promoter-binding-like protein 10 (396 aa).

Residues 74–104 form a disordered region; sequence QSTSINSSSPEDKRCNLASQSSPGDSSSNID. Residues 90–104 show a composition bias toward polar residues; the sequence is LASQSSPGDSSSNID. The SBP-type zinc-finger motif lies at 173–250; that stretch reads VPRCQIDGCE…SHHNARRRKP (78 aa). Zn(2+) contacts are provided by cysteine 176, cysteine 181, cysteine 198, histidine 201, cysteine 217, cysteine 220, histidine 224, and cysteine 236. Residues 233–249 carry the Bipartite nuclear localization signal motif; sequence KRSCRKRLSHHNARRRK.

Zn(2+) is required as a cofactor.

It is found in the nucleus. Functionally, trans-acting factor that binds specifically to the consensus nucleotide sequence 5'-TNCGTACAA-3'. This is Squamosa promoter-binding-like protein 10 (SPL10) from Arabidopsis thaliana (Mouse-ear cress).